A 312-amino-acid chain; its full sequence is Glyoxylate/hydroxypyruvate reductase A (312 aa).

Residue R227 is part of the active site. The Proton donor role is filled by H275.

This sequence belongs to the D-isomer specific 2-hydroxyacid dehydrogenase family. GhrA subfamily.

Its subcellular location is the cytoplasm. It carries out the reaction glycolate + NADP(+) = glyoxylate + NADPH + H(+). The catalysed reaction is (R)-glycerate + NAD(+) = 3-hydroxypyruvate + NADH + H(+). It catalyses the reaction (R)-glycerate + NADP(+) = 3-hydroxypyruvate + NADPH + H(+). Its function is as follows. Catalyzes the NADPH-dependent reduction of glyoxylate and hydroxypyruvate into glycolate and glycerate, respectively. This is Glyoxylate/hydroxypyruvate reductase A from Shigella dysenteriae serotype 1 (strain Sd197).